We begin with the raw amino-acid sequence, 276 residues long: Formamidopyrimidine-DNA glycosylase (276 aa).

The active-site Schiff-base intermediate with DNA is proline 2. Glutamate 3 serves as the catalytic Proton donor. The active-site Proton donor; for beta-elimination activity is the lysine 58. Residues histidine 92, arginine 111, and lysine 154 each coordinate DNA. The FPG-type zinc finger occupies glutamine 239–valine 273. Arginine 263 functions as the Proton donor; for delta-elimination activity in the catalytic mechanism.

It belongs to the FPG family. Monomer. Zn(2+) is required as a cofactor.

It catalyses the reaction Hydrolysis of DNA containing ring-opened 7-methylguanine residues, releasing 2,6-diamino-4-hydroxy-5-(N-methyl)formamidopyrimidine.. It carries out the reaction 2'-deoxyribonucleotide-(2'-deoxyribose 5'-phosphate)-2'-deoxyribonucleotide-DNA = a 3'-end 2'-deoxyribonucleotide-(2,3-dehydro-2,3-deoxyribose 5'-phosphate)-DNA + a 5'-end 5'-phospho-2'-deoxyribonucleoside-DNA + H(+). Functionally, involved in base excision repair of DNA damaged by oxidation or by mutagenic agents. Acts as a DNA glycosylase that recognizes and removes damaged bases. Has a preference for oxidized purines, such as 7,8-dihydro-8-oxoguanine (8-oxoG). Has AP (apurinic/apyrimidinic) lyase activity and introduces nicks in the DNA strand. Cleaves the DNA backbone by beta-delta elimination to generate a single-strand break at the site of the removed base with both 3'- and 5'-phosphates. The chain is Formamidopyrimidine-DNA glycosylase from Lactobacillus acidophilus (strain ATCC 700396 / NCK56 / N2 / NCFM).